A 197-amino-acid polypeptide reads, in one-letter code: Elongation factor Ts (197 aa).

An involved in Mg(2+) ion dislocation from EF-Tu region spans residues 81–84 (TDFV).

This sequence belongs to the EF-Ts family.

Its subcellular location is the cytoplasm. Its function is as follows. Associates with the EF-Tu.GDP complex and induces the exchange of GDP to GTP. It remains bound to the aminoacyl-tRNA.EF-Tu.GTP complex up to the GTP hydrolysis stage on the ribosome. The polypeptide is Elongation factor Ts (Petrotoga mobilis (strain DSM 10674 / SJ95)).